A 59-amino-acid chain; its full sequence is MPGPCCNDKCVCQEGGCKAGCQCTSCRCSPCQKCTSGCKCATKEECSKTCTKPCSCCPK.

The segment at 1-29 (MPGPCCNDKCVCQEGGCKAGCQCTSCRCS) is beta. A divalent metal cation is bound by residues cysteine 5, cysteine 6, cysteine 10, cysteine 17, cysteine 21, cysteine 23, cysteine 26, cysteine 28, cysteine 31, cysteine 34, cysteine 38, cysteine 40, cysteine 46, cysteine 50, cysteine 54, cysteine 56, and cysteine 57. An alpha region spans residues 30–59 (PCQKCTSGCKCATKEECSKTCTKPCSCCPK).

It belongs to the metallothionein superfamily. Type 3 family.

Binds six divalent metal ions. Known to bind copper and cadmium. The polypeptide is Metallothionein-1B (Callinectes sapidus (Blue crab)).